A 206-amino-acid chain; its full sequence is Protein GrpE (206 aa).

Residues 1 to 18 (MNNEDKKLQDEQLQKETV) are compositionally biased toward basic and acidic residues. Positions 1-21 (MNNEDKKLQDEQLQKETVEAA) are disordered.

It belongs to the GrpE family. In terms of assembly, homodimer.

The protein resides in the cytoplasm. In terms of biological role, participates actively in the response to hyperosmotic and heat shock by preventing the aggregation of stress-denatured proteins, in association with DnaK and GrpE. It is the nucleotide exchange factor for DnaK and may function as a thermosensor. Unfolded proteins bind initially to DnaJ; upon interaction with the DnaJ-bound protein, DnaK hydrolyzes its bound ATP, resulting in the formation of a stable complex. GrpE releases ADP from DnaK; ATP binding to DnaK triggers the release of the substrate protein, thus completing the reaction cycle. Several rounds of ATP-dependent interactions between DnaJ, DnaK and GrpE are required for fully efficient folding. This Photobacterium profundum (strain SS9) protein is Protein GrpE.